Here is a 160-residue protein sequence, read N- to C-terminus: 2-C-methyl-D-erythritol 2,4-cyclodiphosphate synthase (160 aa).

Positions 11 and 13 each coordinate a divalent metal cation. Residues 11–13 (DVH) and 37–38 (HS) contribute to the 4-CDP-2-C-methyl-D-erythritol 2-phosphate site. A divalent metal cation is bound at residue histidine 45. Residues 59–61 (DIG), 64–68 (FPDTD), 103–109 (AQAPKMA), 135–138 (TTTE), phenylalanine 142, and arginine 145 each bind 4-CDP-2-C-methyl-D-erythritol 2-phosphate.

Belongs to the IspF family. Homotrimer. A divalent metal cation serves as cofactor.

It catalyses the reaction 4-CDP-2-C-methyl-D-erythritol 2-phosphate = 2-C-methyl-D-erythritol 2,4-cyclic diphosphate + CMP. The protein operates within isoprenoid biosynthesis; isopentenyl diphosphate biosynthesis via DXP pathway; isopentenyl diphosphate from 1-deoxy-D-xylulose 5-phosphate: step 4/6. In terms of biological role, involved in the biosynthesis of isopentenyl diphosphate (IPP) and dimethylallyl diphosphate (DMAPP), two major building blocks of isoprenoid compounds. Catalyzes the conversion of 4-diphosphocytidyl-2-C-methyl-D-erythritol 2-phosphate (CDP-ME2P) to 2-C-methyl-D-erythritol 2,4-cyclodiphosphate (ME-CPP) with a corresponding release of cytidine 5-monophosphate (CMP). This Thioalkalivibrio sulfidiphilus (strain HL-EbGR7) protein is 2-C-methyl-D-erythritol 2,4-cyclodiphosphate synthase.